The sequence spans 173 residues: Photosystem I assembly protein Ycf3 (173 aa).

TPR repeat units lie at residues 35–68, 72–105, and 120–153; these read AFAY…EEDP, SFIL…NPKM, and GQRS…APNN.

This sequence belongs to the Ycf3 family.

It localises to the cellular thylakoid membrane. In terms of biological role, essential for the assembly of the photosystem I (PSI) complex. May act as a chaperone-like factor to guide the assembly of the PSI subunits. This chain is Photosystem I assembly protein Ycf3, found in Synechococcus elongatus (strain ATCC 33912 / PCC 7942 / FACHB-805) (Anacystis nidulans R2).